Here is a 384-residue protein sequence, read N- to C-terminus: DNA replication and repair protein RecF (384 aa).

Residue 30 to 37 (GNNAQGKS) coordinates ATP.

This sequence belongs to the RecF family.

The protein localises to the cytoplasm. The RecF protein is involved in DNA metabolism; it is required for DNA replication and normal SOS inducibility. RecF binds preferentially to single-stranded, linear DNA. It also seems to bind ATP. The chain is DNA replication and repair protein RecF from Gloeothece citriformis (strain PCC 7424) (Cyanothece sp. (strain PCC 7424)).